The primary structure comprises 1677 residues: MEVPEPTCPAPPARDQPAPTPGPPGAPGGQASPHLTLGPVLLPPEQGLAPPTVFLKALPIPLYHTVPPGGLQPRAPLVTGSLDGGNVPFILSPVLQPEGPGPTQVGKPAAPTLTVNIVGTLPVLSPGLGPTLGSPGKVRNAGKYLCPHCGRDCLKPSVLEKHIRSHTGERPFPCATCGIAFKTQSNLYKHRRTQTHLNNSRLSSESEGAGGGLLEEGDKAGEPPRPEGRGESRCQGMHEGASERPLSPGAHVPLLAKNLDVRTEAAPCPGSAFADREAPWDSAPMASPGLPAASTQPWRKLPEQKSPTAGKPCALQRQQATAAEKPWDAKAPEGRLRKCESTDSGYLSRSDSAEQPHAPCSPLHSLSEHSAESEGEGGPGPGPGVAGAEPGAREAGLELEKKRLEERIAQLISHNQAVVDDAQLDNVRPRKTGLSKQGSIDLPTPYTYKDSFHFDIRALEPGRRRAPGPVRSTWTPPDKSRPLFFHSVPTQLSTTVECVPVTRSNSLPFVEGSRTWLEPREPRDPWSRTQKPLSPRPGPARLGCRSGLSSTDVPSGHPRALVRQAAVEDLPGTPIGDALVPAEDTDAKRTAAREAMAGKGRAGGRKCGQRRLKMFSQEKWQVYGDETFKRIYQKMKASPHGGKKAREVGMGSGAELGFPLQKEAAGSSGTVPTQDRRTPVHEDISAGATPEPWGNPPALEASLVTEPTKHGETVARRGDSDRPRVEEAVSSPALGGRDSPCSGSRSPLVSPNGRLELGWQMPPAPGPLKGGDVEAPRPVWPDPKLEGGARGVGDVQETCLWAQTVLRWPSRGSGEDKLPSERKKLKVEDLHSWKQPEPVSAETPGGPTQPASLSSQKQDADPGEVPGGSKESARQVGEPLESSGASLAAASVALKRVGPRDKATPLHPAAPAPAEHPSLATPPQAPRVLSALADNAFSPKYLLRLPQAETPLPLPIPWGPRHSQDSLCSSGWPEERASFVGSGLGTPLSPSPASGPSPGEADSILEDPSCSRPQDGRKGAQLGGDKGDRMATSRPAARELPISAPGAPREATSSPPTPTCEAHLVQDMEGDSHRIHRLCMGSTLARARLSGDVLNPWVPNWELGEPPGNAPEDPSSGPLVGPDPCSPLQPGSFLTALTRPQGVPPGWPELALSSHSGTSRSHSTRSPHSTQNPFPSLKAEPRLTWCCLSRSVPLPAEQKAKAASVYLAVHFPGSSLRDEGPNGPPGSNGGWTWTSPGEGGPAQMSKFSYPTVPGVMPQHQVSEPEWKKGLPWRAKMSRGNSKQRKLKINPKRYKGNFLQSCVQLRASRLRTPTWVRRRSRHPPALEGLKPCRTPGQTSSEIAGLNLQEEPSCATSESPPCCGKEEKKEGDCRQTLGTLSLGTSSRIVREMDKRTVKDISPSAGEHGDCTTHSTAATSGLSLQSDTCLAVVNDVPLPPGKGLDLGLLETQLLASQDSVSTDPKPYIFSDAQRPSSFGSKGTFPHHDIATSVAAVCISLPVRTDHIAQEIHSAESRDHSQTAGRTLTSSSPDSKVTEEGRAQTLLPGRPSSGQRISDSVPLESTEKTHLEIPASGPSSASSHHKEGRHKTFFPSRGQYGCGEMTVPCPSLGSDGRKRQVSGLITRKDSVVPSKPEQPIEIPEAPSKSLKKRSLEGMRKQTRVEFSDTSSDDEDRLVIEI.

Over residues 1–26 the composition is skewed to pro residues; the sequence is MEVPEPTCPAPPARDQPAPTPGPPGA. The disordered stretch occupies residues 1-43; sequence MEVPEPTCPAPPARDQPAPTPGPPGAPGGQASPHLTLGPVLLP. C2H2-type zinc fingers lie at residues 144-166 and 172-196; these read YLCP…IRSH and FPCA…TQTH. Disordered regions lie at residues 193–250, 270–398, 516–557, 663–931, 950–1062, 1100–1119, 1137–1176, 1216–1243, 1510–1597, and 1620–1677; these read TQTH…SPGA, GSAF…AGLE, WLEP…PSGH, EAAG…VLSA, TPLP…TCEA, NWEL…SGPL, LTRP…PFPS, LRDE…GPAQ, SAES…GQYG, and LITR…VIEI. Basic and acidic residues-rich tracts occupy residues 216 to 232 and 325 to 341; these read EGDK…RGES and KPWD…KCES. Gly residues predominate over residues 376 to 385; sequence EGGPGPGPGV. Residues 391-423 are a coiled coil; it reads GAREAGLELEKKRLEERIAQLISHNQAVVDDAQ. Composition is skewed to basic and acidic residues over residues 517–526, 674–684, 707–727, and 813–834; these read LEPREPRDPW, QDRRTPVHEDI, PTKH…RVEE, and SGED…HSWK. Low complexity-rich tracts occupy residues 880-894 and 905-919; these read LESS…SVAL and PLHP…HPSL. A compositionally biased stretch (low complexity) spans 1153–1170; the sequence is SSHSGTSRSHSTRSPHST. Over residues 1518–1531 the composition is skewed to polar residues; the sequence is QTAGRTLTSSSPDS. Basic and acidic residues predominate over residues 1649–1662; it reads RSLEGMRKQTRVEF.

In Homo sapiens (Human), this protein is Zinc finger protein 831 (ZNF831).